Here is a 133-residue protein sequence, read N- to C-terminus: Small ribosomal subunit protein bS6 (133 aa).

Belongs to the bacterial ribosomal protein bS6 family.

Binds together with bS18 to 16S ribosomal RNA. The polypeptide is Small ribosomal subunit protein bS6 (Chlorobium phaeovibrioides (strain DSM 265 / 1930) (Prosthecochloris vibrioformis (strain DSM 265))).